We begin with the raw amino-acid sequence, 156 residues long: Large ribosomal subunit protein uL22 (156 aa).

Belongs to the universal ribosomal protein uL22 family. Part of the 50S ribosomal subunit.

Functionally, this protein binds specifically to 23S rRNA. It makes multiple contacts with different domains of the 23S rRNA in the assembled 50S subunit and ribosome. Its function is as follows. The globular domain of the protein is located near the polypeptide exit tunnel on the outside of the subunit, while an extended beta-hairpin is found that lines the wall of the exit tunnel in the center of the 70S ribosome. The chain is Large ribosomal subunit protein uL22 from Aeropyrum pernix (strain ATCC 700893 / DSM 11879 / JCM 9820 / NBRC 100138 / K1).